Reading from the N-terminus, the 350-residue chain is Hydroxymethylglutaryl-CoA synthase (350 aa).

D30 contributes to the (3S)-3-hydroxy-3-methylglutaryl-CoA binding site. E82 (proton donor/acceptor) is an active-site residue. (3S)-3-hydroxy-3-methylglutaryl-CoA contacts are provided by C114, S155, T203, and H236. Catalysis depends on C114, which acts as the Acyl-thioester intermediate. H236 serves as the catalytic Proton donor/acceptor. R241 serves as a coordination point for CoA. (3S)-3-hydroxy-3-methylglutaryl-CoA contacts are provided by R245, N268, and S298.

This sequence belongs to the thiolase-like superfamily. Archaeal HMG-CoA synthase family. As to quaternary structure, interacts with acetoacetyl-CoA thiolase that catalyzes the precedent step in the pathway and with a DUF35 protein. The acetoacetyl-CoA thiolase/HMG-CoA synthase complex channels the intermediate via a fused CoA-binding site, which allows for efficient coupling of the endergonic thiolase reaction with the exergonic HMGCS reaction.

It carries out the reaction acetoacetyl-CoA + acetyl-CoA + H2O = (3S)-3-hydroxy-3-methylglutaryl-CoA + CoA + H(+). The protein operates within metabolic intermediate biosynthesis; (R)-mevalonate biosynthesis; (R)-mevalonate from acetyl-CoA: step 2/3. Catalyzes the condensation of acetyl-CoA with acetoacetyl-CoA to form 3-hydroxy-3-methylglutaryl-CoA (HMG-CoA). Functions in the mevalonate (MVA) pathway leading to isopentenyl diphosphate (IPP), a key precursor for the biosynthesis of isoprenoid compounds that are building blocks of archaeal membrane lipids. This chain is Hydroxymethylglutaryl-CoA synthase, found in Pyrobaculum calidifontis (strain DSM 21063 / JCM 11548 / VA1).